Reading from the N-terminus, the 262-residue chain is Acyl-[acyl-carrier-protein]--UDP-N-acetylglucosamine O-acyltransferase (262 aa).

It belongs to the transferase hexapeptide repeat family. LpxA subfamily. As to quaternary structure, homotrimer.

It localises to the cytoplasm. It carries out the reaction a (3R)-hydroxyacyl-[ACP] + UDP-N-acetyl-alpha-D-glucosamine = a UDP-3-O-[(3R)-3-hydroxyacyl]-N-acetyl-alpha-D-glucosamine + holo-[ACP]. The protein operates within glycolipid biosynthesis; lipid IV(A) biosynthesis; lipid IV(A) from (3R)-3-hydroxytetradecanoyl-[acyl-carrier-protein] and UDP-N-acetyl-alpha-D-glucosamine: step 1/6. In terms of biological role, involved in the biosynthesis of lipid A, a phosphorylated glycolipid that anchors the lipopolysaccharide to the outer membrane of the cell. The protein is Acyl-[acyl-carrier-protein]--UDP-N-acetylglucosamine O-acyltransferase of Yersinia pseudotuberculosis serotype O:1b (strain IP 31758).